Here is a 332-residue protein sequence, read N- to C-terminus: Ferredoxin--NADP reductase 1 (332 aa).

7 residues coordinate FAD: Asp35, Lys43, Phe48, Val88, Phe123, Asp284, and Thr325.

This sequence belongs to the ferredoxin--NADP reductase type 2 family. Homodimer. FAD is required as a cofactor.

It carries out the reaction 2 reduced [2Fe-2S]-[ferredoxin] + NADP(+) + H(+) = 2 oxidized [2Fe-2S]-[ferredoxin] + NADPH. The protein is Ferredoxin--NADP reductase 1 of Listeria welshimeri serovar 6b (strain ATCC 35897 / DSM 20650 / CCUG 15529 / CIP 8149 / NCTC 11857 / SLCC 5334 / V8).